The primary structure comprises 214 residues: Alpha-S1-casein (214 aa).

The N-terminal stretch at 1 to 15 (MKLLILTCLVAVALA) is a signal peptide. Ser-27 carries the phosphoserine; in allele A modification. Ser-56 is modified (phosphoserine; in allele C). Ser-61 and Ser-63 each carry phosphoserine. Residues 69-91 (MEDAKQMKAGSSSSSEEIVPNSA) are disordered. Ser-79 bears the Phosphoserine; in alleles A and C mark. Residue Ser-80 is modified to Phosphoserine. Residue Ser-81 is modified to Phosphoserine; in alleles A and C. Position 82 is a phosphoserine (Ser-82). Ser-83 carries the post-translational modification Phosphoserine; in alleles A and C. Residue Ser-90 is modified to Phosphoserine. The opioid-like peptide sequence stretch occupies residues 105–111 (RYLGYLE). Ser-130 carries the phosphoserine modification.

It belongs to the alpha-casein family. In terms of tissue distribution, mammary gland specific. Secreted in milk.

Its subcellular location is the secreted. In terms of biological role, important role in the capacity of milk to transport calcium phosphate. The sequence is that of Alpha-S1-casein (CSN1S1) from Ovis aries (Sheep).